The primary structure comprises 171 residues: ATP synthase subunit b (171 aa).

The helical transmembrane segment at 19 to 39 (VGVGLILFIAIVIWAKAPAMI) threads the bilayer.

Belongs to the ATPase B chain family. F-type ATPases have 2 components, F(1) - the catalytic core - and F(0) - the membrane proton channel. F(1) has five subunits: alpha(3), beta(3), gamma(1), delta(1), epsilon(1). F(0) has three main subunits: a(1), b(2) and c(10-14). The alpha and beta chains form an alternating ring which encloses part of the gamma chain. F(1) is attached to F(0) by a central stalk formed by the gamma and epsilon chains, while a peripheral stalk is formed by the delta and b chains.

The protein localises to the cell inner membrane. In terms of biological role, f(1)F(0) ATP synthase produces ATP from ADP in the presence of a proton or sodium gradient. F-type ATPases consist of two structural domains, F(1) containing the extramembraneous catalytic core and F(0) containing the membrane proton channel, linked together by a central stalk and a peripheral stalk. During catalysis, ATP synthesis in the catalytic domain of F(1) is coupled via a rotary mechanism of the central stalk subunits to proton translocation. Functionally, component of the F(0) channel, it forms part of the peripheral stalk, linking F(1) to F(0). This Caulobacter sp. (strain K31) protein is ATP synthase subunit b.